Consider the following 240-residue polypeptide: Proteasome subunit beta type-1 (240 aa).

Methionine 1 is modified (N-acetylmethionine). A propeptide spanning residues 1–27 (MLSTAAYRDPDRELVMGPQGSAGPVQM) is cleaved from the precursor. Residue serine 57 is glycosylated (O-linked (GlcNAc) serine). Residues serine 61 and serine 67 each carry the phosphoserine modification. Tyrosine 149 is modified (phosphotyrosine). Position 161 is a phosphoserine (serine 161). Lysine 203 carries the N6-acetyllysine modification. O-linked (GlcNAc) serine glycosylation is present at serine 208.

The protein belongs to the peptidase T1B family. The 26S proteasome consists of a 20S proteasome core and two 19S regulatory subunits. The 20S proteasome core is a barrel-shaped complex made of 28 subunits that are arranged in four stacked rings. The two outer rings are each formed by seven alpha subunits, and the two inner rings are formed by seven beta subunits. The proteolytic activity is exerted by three beta-subunits PSMB5, PSMB6 and PSMB7. Interacts with SERPINB2. Interacts with RFPL4A. As to expression, ubiquitous.

It is found in the cytoplasm. Its subcellular location is the nucleus. Its function is as follows. Non-catalytic component of the 20S core proteasome complex involved in the proteolytic degradation of most intracellular proteins. This complex plays numerous essential roles within the cell by associating with different regulatory particles. Associated with two 19S regulatory particles, forms the 26S proteasome and thus participates in the ATP-dependent degradation of ubiquitinated proteins. The 26S proteasome plays a key role in the maintenance of protein homeostasis by removing misfolded or damaged proteins that could impair cellular functions, and by removing proteins whose functions are no longer required. Associated with the PA200 or PA28, the 20S proteasome mediates ubiquitin-independent protein degradation. This type of proteolysis is required in several pathways including spermatogenesis (20S-PA200 complex) or generation of a subset of MHC class I-presented antigenic peptides (20S-PA28 complex). This Rattus norvegicus (Rat) protein is Proteasome subunit beta type-1 (Psmb1).